The following is a 381-amino-acid chain: Lipid-A-disaccharide synthase (381 aa).

The protein belongs to the LpxB family.

The enzyme catalyses a lipid X + a UDP-2-N,3-O-bis[(3R)-3-hydroxyacyl]-alpha-D-glucosamine = a lipid A disaccharide + UDP + H(+). It functions in the pathway bacterial outer membrane biogenesis; LPS lipid A biosynthesis. Condensation of UDP-2,3-diacylglucosamine and 2,3-diacylglucosamine-1-phosphate to form lipid A disaccharide, a precursor of lipid A, a phosphorylated glycolipid that anchors the lipopolysaccharide to the outer membrane of the cell. The sequence is that of Lipid-A-disaccharide synthase from Psychromonas ingrahamii (strain DSM 17664 / CCUG 51855 / 37).